Consider the following 1419-residue polypeptide: Collagen alpha-1(II) chain (1419 aa).

An N-terminal signal peptide occupies residues 1–25 (MIRLGAPQSLVLLTLLIATVLQCQG). The propeptide at 26-113 (QDARKLGPKG…PGLGGGNFAA (88 aa)) is N-terminal propeptide. Residues 28–1168 (ARKLGPKGQK…GQREKGPDPL (1141 aa)) are disordered. Composition is skewed to basic and acidic residues over residues 36–47 (QKGEPGDIKDII) and 64–85 (PRGD…RDGE). The segment covering 89 to 104 (PGNPGPPGPPGPPGPP) has biased composition (pro residues). Lysine 122 bears the 5-hydroxylysine mark. O-linked (Gal...) hydroxylysine glycosylation occurs at lysine 122. Low complexity predominate over residues 124-135 (GGAQMGVMQGPM). The triple-helical region stretch occupies residues 133-1146 (GPMGPMGPRG…PGPPGPPGPP (1014 aa)). The span at 140 to 149 (PRGPPGPAGA) shows a compositional bias: pro residues. The span at 150–171 (PGPQGFQGNPGEPGEPGVSGPI) shows a compositional bias: low complexity. A compositionally biased stretch (basic and acidic residues) spans 183–197 (PGDDGEAGKPGKAGE). 3 positions are modified to 5-hydroxylysine: lysine 219, lysine 231, and lysine 240. O-linked (Gal...) hydroxylysine glycans are attached at residues lysine 219, lysine 231, and lysine 240. Composition is skewed to low complexity over residues 242–252 (ESGSPGENGSP) and 267–282 (TGPA…DGQP). Residues 292-301 (GPAGGPGFLG) show a composition bias toward gly residues. A 5-hydroxylysine modification is found at lysine 306. O-linked (Gal...) hydroxylysine glycosylation is present at lysine 306. Residues 335–363 (PAGASGNPGTDGIPGAKGSAGAPGIAGAP) show a composition bias toward low complexity. A compositionally biased stretch (pro residues) spans 365–374 (FPGPRGPPGP). Positions 404 to 417 (ETGPAGPQGAPGPA) are enriched in low complexity. A 5-hydroxylysine mark is found at lysine 540 and lysine 552. O-linked (Gal...) hydroxylysine glycans are attached at residues lysine 540 and lysine 552. The segment covering 554-563 (LAGAPGLRGL) has biased composition (low complexity). 4-hydroxyproline is present on residues proline 591 and proline 600. Proline 602 bears the 3-hydroxyproline; partial mark. Residues proline 603 and proline 606 each carry the 4-hydroxyproline modification. Positions 638-668 (ERGSPGAQGLQGPRGLPGTPGTDGPKGAAGP) are enriched in low complexity. The segment covering 696–707 (KGDRGDVGEKGP) has biased composition (basic and acidic residues). 2 stretches are compositionally biased toward low complexity: residues 765–780 (AGFA…PGAK) and 809–846 (PTGV…NGNP). 3-hydroxyproline; partial is present on proline 839. 3 positions are modified to 4-hydroxyproline: proline 840, proline 846, and proline 852. A compositionally biased stretch (pro residues) spans 1001 to 1011 (APGPPGSPGPA). Residues 1047 to 1061 (RGDKGEAGEPGERGL) show a composition bias toward basic and acidic residues. Proline 1076 carries the post-translational modification 3-hydroxyproline; partial. Composition is skewed to low complexity over residues 1080–1089 (SGDQGTSGPA) and 1103–1113 (PSGKDGSNGIP). Position 1113 is a 4-hydroxyproline (proline 1113). Proline 1118 carries the post-translational modification 3-hydroxyproline. A 4-hydroxyproline modification is found at proline 1119. A compositionally biased stretch (pro residues) spans 1131–1148 (AGPPGNPGPPGPPGPPGP). At proline 1133 the chain carries 3-hydroxyproline; partial. A 4-hydroxyproline mark is found at proline 1134 and proline 1137. Proline 1139 bears the 3-hydroxyproline; partial mark. Residues proline 1140 and proline 1143 each carry the 4-hydroxyproline modification. Proline 1145 bears the 3-hydroxyproline; partial mark. The residue at position 1146 (proline 1146) is a 4-hydroxyproline. The segment at 1147–1173 (GPGIDMSAFAGLGQREKGPDPLQYMRA) is nonhelical region (C-terminal). Residues 1185 to 1419 (VEVDATLKSL…GVDIGPVCFL (235 aa)) enclose the Fibrillar collagen NC1 domain. 3 disulfide bridges follow: cysteine 1215/cysteine 1247, cysteine 1255/cysteine 1417, and cysteine 1325/cysteine 1370. Aspartate 1233, asparagine 1235, glutamine 1236, cysteine 1238, and aspartate 1241 together coordinate Ca(2+). N-linked (GlcNAc...) asparagine glycosylation is present at asparagine 1320.

The protein belongs to the fibrillar collagen family. Homotrimers of alpha 1(II) chains. Post-translationally, contains mostly 4-hydroxyproline. Prolines at the third position of the tripeptide repeating unit (G-X-P) are 4-hydroxylated in some or all of the chains. Contains 3-hydroxyproline at a few sites. This modification occurs on the first proline residue in the sequence motif Gly-Pro-Hyp, where Hyp is 4-hydroxyproline. In terms of processing, lysine residues at the third position of the tripeptide repeating unit (G-X-Y) are 5-hydroxylated in some or all of the chains. Post-translationally, O-glycosylated on hydroxylated lysine residues. The O-linked glycan consists of a Glc-Gal disaccharide. Expressed in chondrocytes.

The protein localises to the secreted. It localises to the extracellular space. It is found in the extracellular matrix. Type II collagen is specific for cartilaginous tissues. It is essential for the normal embryonic development of the skeleton, for linear growth and for the ability of cartilage to resist compressive forces. The polypeptide is Collagen alpha-1(II) chain (Rattus norvegicus (Rat)).